The following is a 144-amino-acid chain: Protein BUD31 homolog (144 aa).

The Nuclear localization signal motif lies at 2-10 (PKVRRSRKP).

It belongs to the BUD31 (G10) family.

The protein localises to the nucleus. The chain is Protein BUD31 homolog from Branchiostoma belcheri (Amphioxus).